The sequence spans 279 residues: Putative polysaccharide deacetylase YxkH (279 aa).

The N-terminal stretch at 1 to 19 is a signal peptide; that stretch reads MKRLFLSIFLLGSCLALAA. The N-palmitoyl cysteine moiety is linked to residue Cys-20. The S-diacylglycerol cysteine moiety is linked to residue Cys-20. The tract at residues 29–51 is disordered; sequence QPMPKAEQKKPEKKAVQVQKKED. The span at 34-51 shows a compositional bias: basic and acidic residues; it reads AEQKKPEKKAVQVQKKED. In terms of domain architecture, NodB homology spans 119–279; sequence KCVLITFDDG…AFGAYIESMK (161 aa).

It belongs to the polysaccharide deacetylase family.

Its subcellular location is the cell membrane. This is Putative polysaccharide deacetylase YxkH (yxkH) from Bacillus subtilis (strain 168).